A 714-amino-acid chain; its full sequence is Protein BLISTER (714 aa).

Disordered regions lie at residues 1 to 113, 219 to 261, 288 to 325, and 519 to 576; these read MASA…VDFS, SSYL…KRSR, VTSS…ASDY, and MVQK…SSNT. The segment covering 8–33 has biased composition (basic and acidic residues); sequence RRQEDVEAGRRKLEQFRKRKAAEKAK. 2 stretches are compositionally biased toward polar residues: residues 36 to 50 and 58 to 74; these read SQNT…QSVI and SISN…TSNE. A compositionally biased stretch (basic and acidic residues) spans 92-102; sequence DGSKERSRQDD. 4 stretches are compositionally biased toward polar residues: residues 219–253, 288–297, 313–322, and 519–561; these read SSYL…SAKS, VTSSGSQLSG, NGPSSLTSGA, and MVQK…SSNQ. Residues 356–525 are a coiled coil; it reads NDDFTALEQH…LQTMVQKASS (170 aa). The segment covering 562–576 has biased composition (low complexity); it reads ETDSTTLLESDSSNT.

In terms of assembly, interacts with CLF. In terms of tissue distribution, expressed in root tips, emerging lateral roots, shoot apical meristem (SAM), vasculature of cotyledons, leaves, sepals and carpels.

The protein resides in the nucleus. It is found in the cytoplasm. Functionally, is required for normal leaf, flower and seed development and controls cotyledon and leaf patterning by inhibiting premature differentiation. Regulates the expression of a subset of PcG target genes. Is required for the repression of the floral specific genes PI, SEP2, and SEP3, but also for the activation of FLC. Involved in response to cold. Involved in the regulation of COR15A, COR15B, BAM3 and AMY3 transcripts, and ascorbate levels in response to prolonged chilling temperatures. This chain is Protein BLISTER, found in Arabidopsis thaliana (Mouse-ear cress).